The sequence spans 402 residues: Subtilisin-like protease 9 (402 aa).

Positions 1–18 (MGFFRILFSLSLCALSLA) are cleaved as a signal peptide. Residues 19 to 120 (IPSKLIGLEN…VEVDRVVKLD (102 aa)) constitute a propeptide that is removed on maturation. One can recognise an Inhibitor I9 domain in the interval 36–119 (SYIVVMKSAV…YVEVDRVVKL (84 aa)). Residues 130–402 (SWGLGRISHR…KKLLYNGSGA (273 aa)) enclose the Peptidase S8 domain. Active-site charge relay system residues include D162 and H193. A glycan (N-linked (GlcNAc...) asparagine) is linked at N254. The Charge relay system role is filled by S348. N390 and N398 each carry an N-linked (GlcNAc...) asparagine glycan.

It belongs to the peptidase S8 family.

Its subcellular location is the secreted. In terms of biological role, secreted subtilisin-like serine protease with keratinolytic activity that contributes to pathogenicity. This chain is Subtilisin-like protease 9 (SUB9), found in Arthroderma gypseum (strain ATCC MYA-4604 / CBS 118893) (Microsporum gypseum).